The primary structure comprises 209 residues: ATP-dependent Clp protease proteolytic subunit (209 aa).

The active-site Nucleophile is serine 103. Histidine 128 is an active-site residue.

It belongs to the peptidase S14 family. In terms of assembly, fourteen ClpP subunits assemble into 2 heptameric rings which stack back to back to give a disk-like structure with a central cavity, resembling the structure of eukaryotic proteasomes.

It is found in the cytoplasm. The catalysed reaction is Hydrolysis of proteins to small peptides in the presence of ATP and magnesium. alpha-casein is the usual test substrate. In the absence of ATP, only oligopeptides shorter than five residues are hydrolyzed (such as succinyl-Leu-Tyr-|-NHMec, and Leu-Tyr-Leu-|-Tyr-Trp, in which cleavage of the -Tyr-|-Leu- and -Tyr-|-Trp bonds also occurs).. Functionally, cleaves peptides in various proteins in a process that requires ATP hydrolysis. Has a chymotrypsin-like activity. Plays a major role in the degradation of misfolded proteins. The polypeptide is ATP-dependent Clp protease proteolytic subunit (Lawsonia intracellularis (strain PHE/MN1-00)).